A 107-amino-acid polypeptide reads, in one-letter code: Phosphoribosyl-ATP pyrophosphatase (107 aa).

The protein belongs to the PRA-PH family.

It localises to the cytoplasm. The enzyme catalyses 1-(5-phospho-beta-D-ribosyl)-ATP + H2O = 1-(5-phospho-beta-D-ribosyl)-5'-AMP + diphosphate + H(+). It participates in amino-acid biosynthesis; L-histidine biosynthesis; L-histidine from 5-phospho-alpha-D-ribose 1-diphosphate: step 2/9. This Methylobacterium radiotolerans (strain ATCC 27329 / DSM 1819 / JCM 2831 / NBRC 15690 / NCIMB 10815 / 0-1) protein is Phosphoribosyl-ATP pyrophosphatase.